The primary structure comprises 33 residues: Pardaxin P-5 (33 aa).

The protein belongs to the pardaxin family. In terms of assembly, monomer. In aqueous solution exists as a tetramer.

It is found in the secreted. The protein resides in the target cell membrane. Exhibits unusual shark repellent and surfactant properties. Forms voltage-dependent, ion-permeable channels in membranes. At high concentration causes cell membrane lysis. The chain is Pardaxin P-5 from Pardachirus marmoratus (Finless sole).